The primary structure comprises 279 residues: Toxin TxP-I (279 aa).

The first 14 residues, 1–14 (MNLFFLFIIPTILA), serve as a signal peptide directing secretion. The propeptide occupies 15 to 27 (VKPFRSFNNISLI).

Contains several disulfide bonds. As to expression, posterior glands which appear to be connected with the stylet through a series of ducts.

The protein localises to the secreted. Part of a complex mixture of neurotoxins which P.tritici utilizes to capture prey. It has contracting-paralyzing activity in insects. This Pyemotes tritici (Straw itch mite) protein is Toxin TxP-I.